Here is a 143-residue protein sequence, read N- to C-terminus: Transcriptional regulator MraZ (143 aa).

SpoVT-AbrB domains follow at residues 5–47 (TFTP…PREE) and 76–119 (ADEQ…DAQA).

It belongs to the MraZ family. In terms of assembly, forms oligomers.

It localises to the cytoplasm. The protein localises to the nucleoid. The chain is Transcriptional regulator MraZ from Corynebacterium urealyticum (strain ATCC 43042 / DSM 7109).